The following is a 400-amino-acid chain: Argininosuccinate synthase (400 aa).

ATP-binding positions include A10–S18 and A38. Residue Y89 participates in L-citrulline binding. An ATP-binding site is contributed by G119. L-aspartate-binding residues include T121, N125, and D126. Residue N125 coordinates L-citrulline. The L-citrulline site is built by R129, S177, S186, E262, and Y274.

It belongs to the argininosuccinate synthase family. Type 1 subfamily. In terms of assembly, homotetramer.

The protein resides in the cytoplasm. The catalysed reaction is L-citrulline + L-aspartate + ATP = 2-(N(omega)-L-arginino)succinate + AMP + diphosphate + H(+). The protein operates within amino-acid biosynthesis; L-arginine biosynthesis; L-arginine from L-ornithine and carbamoyl phosphate: step 2/3. This Synechococcus elongatus (strain ATCC 33912 / PCC 7942 / FACHB-805) (Anacystis nidulans R2) protein is Argininosuccinate synthase.